The primary structure comprises 361 residues: MHHTTVALLFGGRSLEHEISVISARAVAANIDRDRYRVLAVYITRDGGWYAGGVAEQILKLDIADLIRTTSLEATAATLREMVAASAEPPFNFDFRGIDVAFPVLHGSYGEDGRVQGLLETLQVPCTGCGVLASALTMDKALTKLAAADAGLAVAVSVTVMSHAYRRDPEATHRLAVASLSFPMFVKPVSLGSSVGITKVNSESELAEAITHACSLDSKVLIEQAVKGREVEVAVIGNDTLEASPCGEIEPGSEFYDYEDKYIHDTAKLFIPARIPGDLQEKVREAALCAYRALGCRGMSRVDFFVDETTGSIVFNEINTIPGFTPVSMYPRLMAAAGTGFMELTDRLIRLAMEPEAGASA.

One can recognise an ATP-grasp domain in the interval 144 to 350 (KLAAADAGLA…FMELTDRLIR (207 aa)). Residue 177-232 (VASLSFPMFVKPVSLGSSVGITKVNSESELAEAITHACSLDSKVLIEQAVKGREVE) participates in ATP binding. 3 residues coordinate Mg(2+): Asp-303, Glu-317, and Asn-319.

Belongs to the D-alanine--D-alanine ligase family. The cofactor is Mg(2+). It depends on Mn(2+) as a cofactor.

Its subcellular location is the cytoplasm. It carries out the reaction 2 D-alanine + ATP = D-alanyl-D-alanine + ADP + phosphate + H(+). The protein operates within cell wall biogenesis; peptidoglycan biosynthesis. Functionally, cell wall formation. In Chlorobium luteolum (strain DSM 273 / BCRC 81028 / 2530) (Pelodictyon luteolum), this protein is D-alanine--D-alanine ligase.